The sequence spans 192 residues: Orotate phosphoribosyltransferase (192 aa).

A 5-phospho-alpha-D-ribose 1-diphosphate-binding site is contributed by 116–124; sequence EDVVTTGKS. Residues threonine 120 and arginine 148 each contribute to the orotate site.

This sequence belongs to the purine/pyrimidine phosphoribosyltransferase family. PyrE subfamily. Homodimer. Mg(2+) is required as a cofactor.

It carries out the reaction orotidine 5'-phosphate + diphosphate = orotate + 5-phospho-alpha-D-ribose 1-diphosphate. The protein operates within pyrimidine metabolism; UMP biosynthesis via de novo pathway; UMP from orotate: step 1/2. In terms of biological role, catalyzes the transfer of a ribosyl phosphate group from 5-phosphoribose 1-diphosphate to orotate, leading to the formation of orotidine monophosphate (OMP). The polypeptide is Orotate phosphoribosyltransferase (Clostridium perfringens (strain ATCC 13124 / DSM 756 / JCM 1290 / NCIMB 6125 / NCTC 8237 / Type A)).